We begin with the raw amino-acid sequence, 143 residues long: Large ribosomal subunit protein uL15 (143 aa).

The interval 1–47 (MKLHELTPSEGSRFSRRRIGRGDSSGQGKTSGRGQKGQKARGKVRVG) is disordered. The segment covering 23-35 (DSSGQGKTSGRGQ) has biased composition (gly residues).

The protein belongs to the universal ribosomal protein uL15 family. In terms of assembly, part of the 50S ribosomal subunit.

In terms of biological role, binds to the 23S rRNA. The protein is Large ribosomal subunit protein uL15 of Lactiplantibacillus plantarum (strain ATCC BAA-793 / NCIMB 8826 / WCFS1) (Lactobacillus plantarum).